Here is a 425-residue protein sequence, read N- to C-terminus: Proteinase-activated receptor 1 (425 aa).

A signal peptide spans Met1–Ser21. Residues Ala22–Arg41 constitute a propeptide, removed for receptor activation. Asn35, Asn62, and Asn75 each carry an N-linked (GlcNAc...) asparagine glycan. The Extracellular portion of the chain corresponds to Ser42–Thr102. A helical membrane pass occupies residues Leu103–Ile128. Over Leu129–Ala137 the chain is Cytoplasmic. Residues Val138–Phe157 traverse the membrane as a helical segment. At Lys158–Arg176 the chain is on the extracellular side. Cys175 and Cys254 are disulfide-bonded. The chain crosses the membrane as a helical span at residues Phe177–Ile198. The Cytoplasmic segment spans residues Asp199–Arg218. A helical transmembrane segment spans residues Ala219–Leu239. Topologically, residues Lys240 to Ala268 are extracellular. N-linked (GlcNAc...) asparagine glycosylation is found at Asn250 and Asn259. A helical transmembrane segment spans residues Tyr269–Val288. Over Cys289–Ala311 the chain is Cytoplasmic. Residues Leu312–Ile334 traverse the membrane as a helical segment. The Extracellular portion of the chain corresponds to Ala335–Tyr350. Residues Phe351–Ala374 form a helical membrane-spanning segment. Over Ser375–Thr425 the chain is Cytoplasmic. Position 418 is a phosphoserine (Ser418).

Belongs to the G-protein coupled receptor 1 family. Post-translationally, proteolytic cleavage by thrombin generates a new N-terminus that functions as a tethered ligand. Also proteolytically cleaved by cathepsin CTSG. Cleavage at 41-Arg-|-Ser-42 by CTSG results in receptor activation while cleavage at 55-Phe-|-Trp-56 results in inhibition of receptor activation. In terms of processing, phosphorylated in the C-terminal tail; probably mediating desensitization prior to the uncoupling and internalization of the receptor.

It localises to the cell membrane. Its function is as follows. High affinity receptor that binds the activated thrombin, leading to calcium release from intracellular stores. The thrombin-activated receptor signaling pathway is mediated through PTX-insensitive G proteins, activation of phospholipase C resulting in the production of 1D-myo-inositol 1,4,5-trisphosphate (InsP3) which binds to InsP3 receptors causing calcium release from the stores. In astrocytes, the calcium released into the cytosol allows the Ca(2+)-dependent release of L-glutamate into the synaptic cleft through BEST1, that targets the neuronal postsynaptic GRIN2A/NMDAR receptor resulting in the synaptic plasticity regulation. May play a role in platelets activation and in vascular development. Mediates up-regulation of pro-inflammatory cytokines, such as MCP-1/CCL2 and IL6, triggered by coagulation factor Xa (F10) in cardiac fibroblasts and umbilical vein endothelial cells. This is Proteinase-activated receptor 1 from Papio hamadryas (Hamadryas baboon).